A 476-amino-acid polypeptide reads, in one-letter code: NADP-dependent glyceraldehyde-3-phosphate dehydrogenase (476 aa).

Arg103 contacts substrate. Ser151 lines the NADP(+) pocket. 154–155 contributes to the substrate binding site; the sequence is NY. Residues Lys177, Thr180, Asp215, and 230 to 251 contribute to the NADP(+) site; that span reads GSTPVGEHIGHLAGMRPIMLEL. Residues Glu250 and Cys284 contribute to the active site. Residue 283 to 285 participates in substrate binding; sequence RCT. Glu377 contacts NADP(+). Residue Arg437 coordinates substrate.

This sequence belongs to the aldehyde dehydrogenase family. Homotetramer.

It carries out the reaction D-glyceraldehyde 3-phosphate + NADP(+) + H2O = (2R)-3-phosphoglycerate + NADPH + 2 H(+). Catalyzes the irreversible NADP-dependent oxidation of glyceraldehyde-3-phosphate to 3-phosphoglycerate. Is not able to use NAD instead of NADP. May play an important role in NADPH production in S.equinus. The chain is NADP-dependent glyceraldehyde-3-phosphate dehydrogenase (gapN) from Streptococcus equinus (Streptococcus bovis).